Here is a 178-residue protein sequence, read N- to C-terminus: Cell division protein ZapC (178 aa).

The protein belongs to the ZapC family. Interacts directly with FtsZ.

The protein localises to the cytoplasm. Its function is as follows. Contributes to the efficiency of the cell division process by stabilizing the polymeric form of the cell division protein FtsZ. Acts by promoting interactions between FtsZ protofilaments and suppressing the GTPase activity of FtsZ. In Aeromonas hydrophila subsp. hydrophila (strain ATCC 7966 / DSM 30187 / BCRC 13018 / CCUG 14551 / JCM 1027 / KCTC 2358 / NCIMB 9240 / NCTC 8049), this protein is Cell division protein ZapC.